Reading from the N-terminus, the 533-residue chain is Intestinal-type alkaline phosphatase (533 aa).

Residues 1 to 19 (MQGACVLLLLGLHLQLSLG) form the signal peptide. A Mg(2+)-binding site is contributed by Asp61. Residues Asp61 and Ser111 each contribute to the Zn(2+) site. The active-site Phosphoserine intermediate is the Ser111. A disulfide bridge connects residues Cys140 and Cys202. Ser174 contributes to the Mg(2+) binding site. Glu235 contributes to the Ca(2+) binding site. N-linked (GlcNAc...) asparagine glycosylation occurs at Asn268. Ca(2+) is bound by residues Phe288, Glu289, and Asp304. Glu330 provides a ligand contact to Mg(2+). The Zn(2+) site is built by Asp335, His339, Asp376, and His377. Asn429 carries N-linked (GlcNAc...) asparagine glycosylation. A Zn(2+)-binding site is contributed by His451. An intrachain disulfide couples Cys486 to Cys493. Residue Asp506 is the site of GPI-anchor amidated aspartate attachment. Positions 507–533 (AAHLAASPPPLALLAGAMLLLLAPTLY) are cleaved as a propeptide — removed in mature form.

This sequence belongs to the alkaline phosphatase family. As to quaternary structure, homodimer. Mg(2+) serves as cofactor. The cofactor is Zn(2+). Requires Ca(2+) as cofactor.

Its subcellular location is the cell membrane. The catalysed reaction is a phosphate monoester + H2O = an alcohol + phosphate. Functionally, alkaline phosphatase that can hydrolyze various phosphate compounds. This Bos taurus (Bovine) protein is Intestinal-type alkaline phosphatase (ALPI).